The chain runs to 338 residues: Glyceraldehyde-3-phosphate dehydrogenase 2 (338 aa).

NAD(+) is bound by residues 12–13 (RI), Asp-34, and Arg-79. D-glyceraldehyde 3-phosphate-binding positions include 150–152 (SCT), Thr-181, 210–211 (TG), and Arg-233. Residue Cys-151 is the Nucleophile of the active site. Asn-315 is an NAD(+) binding site.

It belongs to the glyceraldehyde-3-phosphate dehydrogenase family. Homotetramer.

Its subcellular location is the cytoplasm. It carries out the reaction D-glyceraldehyde 3-phosphate + phosphate + NAD(+) = (2R)-3-phospho-glyceroyl phosphate + NADH + H(+). Its pathway is carbohydrate degradation; glycolysis; pyruvate from D-glyceraldehyde 3-phosphate: step 1/5. The chain is Glyceraldehyde-3-phosphate dehydrogenase 2 (GPD2) from Mucor circinelloides f. lusitanicus (Mucor racemosus var. lusitanicus).